A 222-amino-acid polypeptide reads, in one-letter code: UPF0128 protein PYRAB08320 (222 aa).

It belongs to the UPF0128 family.

The sequence is that of UPF0128 protein PYRAB08320 from Pyrococcus abyssi (strain GE5 / Orsay).